Consider the following 497-residue polypeptide: Probable cytosol aminopeptidase (497 aa).

2 residues coordinate Mn(2+): K264 and D269. Residue K276 is part of the active site. 3 residues coordinate Mn(2+): D287, D346, and E348. Residue R350 is part of the active site.

The protein belongs to the peptidase M17 family. Mn(2+) is required as a cofactor.

The protein resides in the cytoplasm. The enzyme catalyses Release of an N-terminal amino acid, Xaa-|-Yaa-, in which Xaa is preferably Leu, but may be other amino acids including Pro although not Arg or Lys, and Yaa may be Pro. Amino acid amides and methyl esters are also readily hydrolyzed, but rates on arylamides are exceedingly low.. It catalyses the reaction Release of an N-terminal amino acid, preferentially leucine, but not glutamic or aspartic acids.. Presumably involved in the processing and regular turnover of intracellular proteins. Catalyzes the removal of unsubstituted N-terminal amino acids from various peptides. The protein is Probable cytosol aminopeptidase of Persephonella marina (strain DSM 14350 / EX-H1).